A 303-amino-acid polypeptide reads, in one-letter code: N-acetyl-D-glucosamine kinase (303 aa).

Residues 4-11 (GFDIGGTK) and 133-140 (GVGGGLVL) contribute to the ATP site. Zn(2+)-binding residues include H157, C177, C179, and C184.

The protein belongs to the ROK (NagC/XylR) family. NagK subfamily.

It carries out the reaction N-acetyl-D-glucosamine + ATP = N-acetyl-D-glucosamine 6-phosphate + ADP + H(+). It participates in cell wall biogenesis; peptidoglycan recycling. Catalyzes the phosphorylation of N-acetyl-D-glucosamine (GlcNAc) derived from cell-wall degradation, yielding GlcNAc-6-P. This Salmonella paratyphi B (strain ATCC BAA-1250 / SPB7) protein is N-acetyl-D-glucosamine kinase.